The chain runs to 98 residues: DNA-binding protein Fis (98 aa).

Residues 74–93 (QTRAATMLGINRGTLRKKLK) constitute a DNA-binding region (H-T-H motif).

It belongs to the transcriptional regulatory Fis family. In terms of assembly, homodimer.

Activates ribosomal RNA transcription. Plays a direct role in upstream activation of rRNA promoters. This Haemophilus ducreyi (strain 35000HP / ATCC 700724) protein is DNA-binding protein Fis.